The chain runs to 765 residues: Probable dipeptidyl peptidase 4 (765 aa).

An N-terminal signal peptide occupies residues 1–14; that stretch reads MKWSILLLVGCAAA. 8 N-linked (GlcNAc...) asparagine glycosylation sites follow: asparagine 35, asparagine 78, asparagine 101, asparagine 110, asparagine 169, asparagine 218, asparagine 465, and asparagine 490. Catalysis depends on serine 613, which acts as the Charge relay system. A glycan (N-linked (GlcNAc...) asparagine) is linked at asparagine 665. Catalysis depends on charge relay system residues aspartate 690 and histidine 725.

It belongs to the peptidase S9B family.

Its subcellular location is the secreted. It catalyses the reaction Release of an N-terminal dipeptide, Xaa-Yaa-|-Zaa-, from a polypeptide, preferentially when Yaa is Pro, provided Zaa is neither Pro nor hydroxyproline.. In terms of biological role, extracellular dipeptidyl-peptidase which removes N-terminal dipeptides sequentially from polypeptides having unsubstituted N-termini provided that the penultimate residue is proline. Contributes to pathogenicity. The chain is Probable dipeptidyl peptidase 4 (dpp4) from Aspergillus fumigatus (strain ATCC MYA-4609 / CBS 101355 / FGSC A1100 / Af293) (Neosartorya fumigata).